The chain runs to 138 residues: MSSQSFRQIIGLAPSTATITDSTLIIVDAQNEYAQGLLRVQEVDQSRKVIADLLSRYRYMAHVCVSTTARTGAELGYDVLVVRDGVSDRAIPGVEANVLVDVALKEVTDAFGTVIASGEIKGVIYPVIFLYLYIQDLI.

Belongs to the isochorismatase family.

The enzyme catalyses [(1'E)-5'-(3',3'-dimethyloxiran-2'-yl)-3'-hydroxy-3'-methylpent-1'-en-1'-yl]-quinolinone B = yaequinolone C. It participates in secondary metabolite biosynthesis. It functions in the pathway alkaloid biosynthesis. Its pathway is mycotoxin biosynthesis. Its function is as follows. Isochorismatase-like protein; part of the gene cluster that mediates the biosynthesis of the aspoquinolone mycotoxins. Within the pathway, asqB converts [(1'E)-5'-(3',3'-dimethyloxiran-2'-yl)-3'-hydroxy-3'-methylpent-1'-en-1'-yl]-quinolinone B into yaequinolone C. The first step of the pathway is catalyzed by the nonribosomal peptide synthetase asqK that condenses anthranilic acid and O-methyl-L-tyrosine to produce 4'-methoxycyclopeptin. 4'-methoxycyclopeptin is then converted to 4'-methoxydehydrocyclopeptin by the ketoglutarate-dependent dioxygenase asqJ. AsqJ also converts its first product 4'-methoxydehydrocyclopeptin to 4'-methoxycyclopenin. The following conversion of 4'-methoxycyclopenin into 4'-methoxyviridicatin is catalyzed by the cyclopenase asqI. 4'-methoxyviridicatin is the precursor of quinolone natural products, and is further converted to quinolinone B. The prenyltransferase asqH1 then catalyzes the canonical Friedel-Crafts alkylation of quinolinone B with dimethylallyl cation to yield dimethylallyl quinolone, which is subjected to FAD-dependent dehydrogenation by the FAD-linked oxidoreductase asqF to yield conjugated aryl diene. The delta(3') double bond then serves as the site of the second alkylation with DMAPP catalyzed by the prenyltransferase asqH2 to yield a carbenium ion intermediate, which can be attacked by H(2)O to yield a styrenyl quinolone containing a C3'-hydroxyprenyl chain. The FAD-dependent monooxygenase asqG performs epoxidation of the terminal C7'-C8' olefin. Finally, after dehydratation of the epoxide at C3 by asqC, the quinolone epoxide rearrangement protein asqO catalyzes an enzymatic 3-exo-tet cyclization to yield the cyclopropyl-THF ring system in aspoquinolone. This Emericella nidulans (strain FGSC A4 / ATCC 38163 / CBS 112.46 / NRRL 194 / M139) (Aspergillus nidulans) protein is Isochorismatase-like protein asqB.